The sequence spans 104 residues: MKNDITFYTRFQQDILAGTKTITIRDESEAHFMPGQRLRTGRYEDNGYFCTLEVLRVTPVTLAQLNEEHARQENMTLAELKKVIADIYPGINELYVIAFKKVEG.

The 97-residue stretch at 6-102 (TFYTRFQQDI…ELYVIAFKKV (97 aa)) folds into the ASCH domain. Residue K20 is the Proton acceptor of the active site. The active-site Nucleophile is the T23. E73 (proton donor) is an active-site residue.

The protein belongs to the N(4)-acetylcytidine amidohydrolase family.

The catalysed reaction is N(4)-acetylcytidine + H2O = cytidine + acetate + H(+). The enzyme catalyses N(4)-acetyl-2'-deoxycytidine + H2O = 2'-deoxycytidine + acetate + H(+). It catalyses the reaction N(4)-acetylcytosine + H2O = cytosine + acetate + H(+). Its function is as follows. Catalyzes the hydrolysis of N(4)-acetylcytidine (ac4C). This is N(4)-acetylcytidine amidohydrolase from Cronobacter sakazakii (strain ATCC BAA-894) (Enterobacter sakazakii).